The primary structure comprises 188 residues: tRNA(Phe) 7-((3-amino-3-carboxypropyl)-4-demethylwyosine(37)-N(4))-methyltransferase (188 aa).

The protein belongs to the TYW3 family.

The enzyme catalyses 4-demethyl-7-[(3S)-3-amino-3-carboxypropyl]wyosine(37) in tRNA(Phe) + S-adenosyl-L-methionine = 7-[(3S)-3-amino-3-carboxypropyl]wyosine(37) in tRNA(Phe) + S-adenosyl-L-homocysteine + H(+). S-adenosyl-L-methionine-dependent methyltransferase that acts as a component of the wyosine derivatives biosynthesis pathway. Probably methylates N-4 position of wybutosine-86 to produce wybutosine-72. In Aeropyrum pernix (strain ATCC 700893 / DSM 11879 / JCM 9820 / NBRC 100138 / K1), this protein is tRNA(Phe) 7-((3-amino-3-carboxypropyl)-4-demethylwyosine(37)-N(4))-methyltransferase.